A 129-amino-acid polypeptide reads, in one-letter code: uncharacterized protein (129 aa).

This is an uncharacterized protein from Mycoplasma pneumoniae (strain ATCC 29342 / M129 / Subtype 1) (Mycoplasmoides pneumoniae).